Here is a 216-residue protein sequence, read N- to C-terminus: ATP-dependent Clp protease proteolytic subunit 1 (216 aa).

Serine 119 acts as the Nucleophile in catalysis. Histidine 144 is a catalytic residue.

It belongs to the peptidase S14 family. In terms of assembly, fourteen ClpP subunits assemble into 2 heptameric rings which stack back to back to give a disk-like structure with a central cavity, resembling the structure of eukaryotic proteasomes.

Its subcellular location is the cytoplasm. It carries out the reaction Hydrolysis of proteins to small peptides in the presence of ATP and magnesium. alpha-casein is the usual test substrate. In the absence of ATP, only oligopeptides shorter than five residues are hydrolyzed (such as succinyl-Leu-Tyr-|-NHMec, and Leu-Tyr-Leu-|-Tyr-Trp, in which cleavage of the -Tyr-|-Leu- and -Tyr-|-Trp bonds also occurs).. Cleaves peptides in various proteins in a process that requires ATP hydrolysis. Has a chymotrypsin-like activity. Plays a major role in the degradation of misfolded proteins. The chain is ATP-dependent Clp protease proteolytic subunit 1 from Cutibacterium acnes (strain DSM 16379 / KPA171202) (Propionibacterium acnes).